Here is a 524-residue protein sequence, read N- to C-terminus: Excitatory amino acid transporter 3 (524 aa).

Over 1–18 (MGKPARKGCDWKRFLRNN) the chain is Cytoplasmic. A helical membrane pass occupies residues 19 to 38 (WLLLSTVVAVVLGIVIGVLV). Topologically, residues 39 to 61 (REYSKLSNLEKFYFSFPGEILMR) are extracellular. Residues 62–82 (MLKLVILPLIVSSMITGVATL) form a helical membrane-spanning segment. Over 83-93 (DSNVSGKIGLR) the chain is Cytoplasmic. The helical transmembrane segment at 94–114 (AVVYYFCTTLIAVILGIVLVV) threads the bilayer. Na(+)-binding residues include tyrosine 98, threonine 101, and threonine 102. Residues 115–205 (SIKPGVTQKV…KTKEYKVVGM (91 aa)) are Extracellular-facing. Residues asparagine 178 and asparagine 195 are each glycosylated (N-linked (GlcNAc...) asparagine). The helical transmembrane segment at 206–229 (YSDGINVLGLIVFCLVLGIVIGRK) threads the bilayer. Residues 230-238 (WEKGQILVD) lie on the Cytoplasmic side of the membrane. A helical membrane pass occupies residues 239 to 266 (FFNALSDATMKIVQIIMCYMPIGILFLI). The Extracellular segment spans residues 267–286 (AGKIIEVEDWEIFRKLGLYM). Residues 287 to 308 (ATVLSGLAIHSIVILPLIYFII) form a helical membrane-spanning segment. At 309-313 (VRKNP) the chain is on the cytoplasmic side. Residues 314-344 (FQFAMGMAQALLTALMISSSSATLPVTFRCA) constitute an intramembrane region (discontinuously helical). L-aspartate is bound by residues serine 331 and serine 333. The Cytoplasmic portion of the chain corresponds to 345-353 (EEKNRVDKR). Residues 354-380 (ITRFVLPVGATINMDGTALYEAVAAVF) traverse the membrane as a helical segment. The Na(+) site is built by glycine 362, threonine 364, asparagine 366, and aspartate 368. Threonine 370 serves as a coordination point for L-aspartate. Topologically, residues 381 to 393 (IAQLNDLDLSVGQ) are extracellular. Residues 394 to 427 (IITISVTATAASIGAAGVPQPGLVTMVIVLSAVG) constitute an intramembrane region (discontinuously helical). 3 residues coordinate Na(+): serine 405, isoleucine 406, and alanine 408. Valine 411 contacts L-aspartate. The Extracellular portion of the chain corresponds to 428–440 (LPAEDVTLIIAVD). A helical transmembrane segment spans residues 441–462 (WLLDRFRTMVNVLGDAFGTGIV). 3 residues coordinate L-aspartate: arginine 447, threonine 448, and asparagine 451. Positions 451 and 455 each coordinate Na(+). Topologically, residues 463–524 (EKLSKKELEQ…TISFTQTSQF (62 aa)) are cytoplasmic. Phosphoserine occurs at positions 517 and 522.

It belongs to the dicarboxylate/amino acid:cation symporter (DAACS) (TC 2.A.23) family. SLC1A1 subfamily. Homotrimer. Interacts with ARL6IP5. Interacts with RTN2 (via N-terminus); the interaction promotes cell surface expression of SLC1A1. Interacts with SORCS2; this interaction is important for normal expression at the cell membrane.

It is found in the cell membrane. Its subcellular location is the apical cell membrane. It localises to the synapse. The protein localises to the synaptosome. The protein resides in the early endosome membrane. It is found in the late endosome membrane. Its subcellular location is the recycling endosome membrane. The enzyme catalyses K(+)(in) + L-glutamate(out) + 3 Na(+)(out) + H(+)(out) = K(+)(out) + L-glutamate(in) + 3 Na(+)(in) + H(+)(in). It catalyses the reaction K(+)(in) + L-aspartate(out) + 3 Na(+)(out) + H(+)(out) = K(+)(out) + L-aspartate(in) + 3 Na(+)(in) + H(+)(in). It carries out the reaction D-aspartate(out) + K(+)(in) + 3 Na(+)(out) + H(+)(out) = D-aspartate(in) + K(+)(out) + 3 Na(+)(in) + H(+)(in). The catalysed reaction is K(+)(in) + L-cysteine(out) + 3 Na(+)(out) + H(+)(out) = K(+)(out) + L-cysteine(in) + 3 Na(+)(in) + H(+)(in). Sodium-dependent, high-affinity amino acid transporter that mediates the uptake of L-glutamate and also L-aspartate and D-aspartate. Can also transport L-cysteine. Functions as a symporter that transports one amino acid molecule together with two or three Na(+) ions and one proton, in parallel with the counter-transport of one K(+) ion. Mediates Cl(-) flux that is not coupled to amino acid transport; this avoids the accumulation of negative charges due to aspartate and Na(+) symport. Plays an important role in L-glutamate and L-aspartate reabsorption in renal tubuli. Plays a redundant role in the rapid removal of released glutamate from the synaptic cleft, which is essential for terminating the postsynaptic action of glutamate. Contributes to glutathione biosynthesis and protection against oxidative stress via its role in L-glutamate and L-cysteine transport. Negatively regulated by ARL6IP5. The protein is Excitatory amino acid transporter 3 (SLC1A1) of Bos taurus (Bovine).